A 498-amino-acid polypeptide reads, in one-letter code: DEAD-box ATP-dependent RNA helicase 6 (498 aa).

The segment at 1–109 is disordered; the sequence is MDPRARYPPG…WKAQLKLPPQ (109 aa). A compositionally biased stretch (basic residues) spans 33-49; it reads QHQHQHQQPPHPHHHQY. Low complexity-rich tracts occupy residues 50 to 61 and 75 to 86; these read VQRQPQPQQTPH and AAEAAGASEQKA. A Q motif motif is present at residues 124 to 152; the sequence is NEFEDYFLKRELLMGIYEKGFERPSPIQE. One can recognise a Helicase ATP-binding domain in the interval 155 to 325; the sequence is IPIALTGSDI…DKYLPKPYVI (171 aa). ATP is bound at residue 168–175; that stretch reads AKNGTGKT. The short motif at 273–276 is the DEAD box element; sequence DEAD. The Helicase C-terminal domain maps to 335–495; sequence GITQFYAFVE…PIPPQIDRAI (161 aa).

It belongs to the DEAD box helicase family. DDX6/DHH1 subfamily.

The protein localises to the cytoplasm. The protein resides in the P-body. The catalysed reaction is ATP + H2O = ADP + phosphate + H(+). ATP-dependent RNA helicase involved in mRNA turnover, and more specifically in mRNA decapping. This is DEAD-box ATP-dependent RNA helicase 6 from Oryza sativa subsp. japonica (Rice).